The chain runs to 433 residues: MAFEFRLPDIGEGIHEGEIVKWFIKAGDTIEEDDVLAEVQNDKSVVEIPSPVSGTVEEVLVDEGTVAVVGDVIVKIDAPDAEEMQFKGHGDDEDSKKEEKEQESPVQEEASSTQSQEKTEVDESKTVKAMPSVRKYARENGVNIKAVNGSGKNGRITKEDIDAYLNGGSSEEGSNTSAASESTSSDVVNASATQALPEGDFPETTEKIPAMRKAIAKAMVNSKHTAPHVTLMDEIDVQELWDHRKKFKEIAAEQGTKLTFLPYVVKALVSALKKYPALNTSFNEEAGEVVHKHYWNIGIAADTDKGLLVPVVKHADRKSIFEISDEINELAVKARDGKLTSEEMKGATCTISNIGSAGGQWFTPVINHPEVAILGIGRIAQKPIVKDGEIVAAPVLALSLSFDHRQIDGATGQNAMNHIKRLLNNPELLLMEG.

The Lipoyl-binding domain occupies 2 to 77; it reads AFEFRLPDIG…VVGDVIVKID (76 aa). The residue at position 43 (lysine 43) is an N6-lipoyllysine. 2 disordered regions span residues 80 to 134 and 164 to 204; these read DAEE…PSVR and YLNG…FPET. Basic and acidic residues-rich tracts occupy residues 84–103 and 117–126; these read MQFK…KEQE and EKTEVDESKT. One can recognise a Peripheral subunit-binding (PSBD) domain in the interval 128–165; sequence KAMPSVRKYARENGVNIKAVNGSGKNGRITKEDIDAYL. The segment covering 166-185 has biased composition (low complexity); that stretch reads NGGSSEEGSNTSAASESTSS. The active site involves histidine 404.

This sequence belongs to the 2-oxoacid dehydrogenase family. In terms of assembly, forms a 24-polypeptide structural core with octahedral symmetry. It depends on (R)-lipoate as a cofactor.

The enzyme catalyses N(6)-[(R)-dihydrolipoyl]-L-lysyl-[protein] + acetyl-CoA = N(6)-[(R)-S(8)-acetyldihydrolipoyl]-L-lysyl-[protein] + CoA. Its function is as follows. The pyruvate dehydrogenase complex catalyzes the overall conversion of pyruvate to acetyl-CoA and CO(2). It contains multiple copies of three enzymatic components: pyruvate dehydrogenase (E1), dihydrolipoamide acetyltransferase (E2) and lipoamide dehydrogenase (E3). The chain is Dihydrolipoyllysine-residue acetyltransferase component of pyruvate dehydrogenase complex (pdhC) from Staphylococcus epidermidis (strain ATCC 35984 / DSM 28319 / BCRC 17069 / CCUG 31568 / BM 3577 / RP62A).